Consider the following 175-residue polypeptide: Protein FMP23, mitochondrial (175 aa).

Residues methionine 1–phenylalanine 38 constitute a mitochondrion transit peptide.

It is found in the mitochondrion. In terms of biological role, may be involved in mitochondrial iron or copper homeostatis. In Saccharomyces cerevisiae (strain ATCC 204508 / S288c) (Baker's yeast), this protein is Protein FMP23, mitochondrial (FMP23).